A 92-amino-acid polypeptide reads, in one-letter code: Small ribosomal subunit protein uS19 (92 aa).

It belongs to the universal ribosomal protein uS19 family.

Protein S19 forms a complex with S13 that binds strongly to the 16S ribosomal RNA. This is Small ribosomal subunit protein uS19 from Rippkaea orientalis (strain PCC 8801 / RF-1) (Cyanothece sp. (strain PCC 8801)).